Consider the following 319-residue polypeptide: Glycine--tRNA ligase alpha subunit (319 aa).

It belongs to the class-II aminoacyl-tRNA synthetase family. As to quaternary structure, tetramer of two alpha and two beta subunits.

The protein resides in the cytoplasm. The catalysed reaction is tRNA(Gly) + glycine + ATP = glycyl-tRNA(Gly) + AMP + diphosphate. The sequence is that of Glycine--tRNA ligase alpha subunit from Coxiella burnetii (strain CbuK_Q154) (Coxiella burnetii (strain Q154)).